The following is a 260-amino-acid chain: CD40 ligand (260 aa).

Over 1–22 (MIETYSQTAPRSVAPGPPVSMK) the chain is Cytoplasmic. The chain crosses the membrane as a helical; Signal-anchor for type II membrane protein span at residues 23 to 46 (IFMYLLTVFLITQMIGSALFAVYL). Residues 47 to 260 (HRRLDKIEDE…GFTSFGLLKL (214 aa)) lie on the Extracellular side of the membrane. Residues 121 to 260 (VAAHVISEAS…GFTSFGLLKL (140 aa)) enclose the THD domain. A disulfide bond links Cys177 and Cys217. A glycan (N-linked (GlcNAc...) asparagine) is linked at Asn239.

It belongs to the tumor necrosis factor family. In terms of assembly, homotrimer. Interacts with CD28. CD40 ligand, soluble form: Exists as either a monomer or a homotrimer. Forms a ternary complex between CD40 and integrins for CD40-CD40LG signaling. Post-translationally, the soluble form derives from the membrane form by proteolytic processing.

The protein localises to the cell membrane. It is found in the cell surface. Its subcellular location is the secreted. Functionally, cytokine that acts as a ligand to CD40/TNFRSF5. Costimulates T-cell proliferation and cytokine production. Its cross-linking on T-cells generates a costimulatory signal which enhances the production of IL4 and IL10 in conjunction with the TCR/CD3 ligation and CD28 costimulation. Induces the activation of NF-kappa-B. Induces the activation of kinases MAPK8 and PAK2 in T-cells. Mediates B-cell proliferation in the absence of co-stimulus as well as IgE production in the presence of IL4. Involved in immunoglobulin class switching. Its function is as follows. Acts as a ligand for integrins, specifically ITGA5:ITGB1 and ITGAV:ITGB3; both integrins and the CD40 receptor are required for activation of CD40-CD40LG signaling, which have cell-type dependent effects, such as B-cell activation, NF-kappa-B signaling and anti-apoptotic signaling. The sequence is that of CD40 ligand (CD40LG) from Felis catus (Cat).